Consider the following 291-residue polypeptide: S-methyl-5'-thioadenosine phosphorylase (291 aa).

Phosphate is bound by residues Ser-12, Arg-54 to His-55, and Ser-87 to Ala-88. Met-185 is a substrate binding site. Thr-186 contributes to the phosphate binding site. Asp-209 to Asp-211 is a substrate binding site.

Belongs to the PNP/MTAP phosphorylase family. MTAP subfamily. In terms of assembly, homohexamer. Dimer of a homotrimer.

The enzyme catalyses S-methyl-5'-thioadenosine + phosphate = 5-(methylsulfanyl)-alpha-D-ribose 1-phosphate + adenine. The protein operates within amino-acid biosynthesis; L-methionine biosynthesis via salvage pathway; S-methyl-5-thio-alpha-D-ribose 1-phosphate from S-methyl-5'-thioadenosine (phosphorylase route): step 1/1. Catalyzes the reversible phosphorylation of S-methyl-5'-thioadenosine (MTA) to adenine and 5-methylthioribose-1-phosphate. Involved in the breakdown of MTA, a major by-product of polyamine biosynthesis. Responsible for the first step in the methionine salvage pathway after MTA has been generated from S-adenosylmethionine. Has broad substrate specificity with 6-aminopurine nucleosides as preferred substrates. This chain is S-methyl-5'-thioadenosine phosphorylase, found in Bradyrhizobium diazoefficiens (strain JCM 10833 / BCRC 13528 / IAM 13628 / NBRC 14792 / USDA 110).